A 722-amino-acid chain; its full sequence is Pesticidal crystal protein Cry22Aa (722 aa).

Promotes colloidosmotic lysis by binding to the midgut epithelial cells of hymenopteran species. The chain is Pesticidal crystal protein Cry22Aa (cry22Aa) from Bacillus thuringiensis.